We begin with the raw amino-acid sequence, 359 residues long: Probable F-box protein At3g61730 (359 aa).

2 stretches are compositionally biased toward basic and acidic residues: residues 1–14 and 37–48; these read MKTR…DSRG and QKNDIQREEDGR. Residues 1 to 60 form a disordered region; the sequence is MKTRSSDAEGDSRGKMIAPVGEGNGGRKRKLVQSNEQKNDIQREEDGRAKRRIVQSSDQK. Residues 82–128 form the F-box; degenerate domain; that stretch reads QSRFSWYEQDIWTYISRFLDGKSLVKLGATNKWFYKIAMEDTVWRFA.

Interacts with SKP1A. As to expression, expressed in flower buds, developing anthers, pollen grains, siliques, rosette leaves and roots. Detected at lower levels in open flowers, stems and cauline leaves. Expressed in young seedling in the hydathodes, shoot apical meristem, root tips and lateral root primordia.

The protein resides in the nucleus. Its function is as follows. Regulates tapetum degeneration and pollen maturation during anther development. This is Probable F-box protein At3g61730 (RMF) from Arabidopsis thaliana (Mouse-ear cress).